Consider the following 180-residue polypeptide: Aspartate 1-decarboxylase (180 aa).

Residue S24 is the Schiff-base intermediate with substrate; via pyruvic acid of the active site. A Pyruvic acid (Ser) modification is found at S24. T56 serves as a coordination point for substrate. The active-site Proton donor is Y57. 72–74 provides a ligand contact to substrate; sequence GAA.

This sequence belongs to the PanD family. In terms of assembly, heterooctamer of four alpha and four beta subunits. Pyruvate is required as a cofactor. Post-translationally, is synthesized initially as an inactive proenzyme, which is activated by self-cleavage at a specific serine bond to produce a beta-subunit with a hydroxyl group at its C-terminus and an alpha-subunit with a pyruvoyl group at its N-terminus.

The protein resides in the cytoplasm. It catalyses the reaction L-aspartate + H(+) = beta-alanine + CO2. It participates in cofactor biosynthesis; (R)-pantothenate biosynthesis; beta-alanine from L-aspartate: step 1/1. Functionally, catalyzes the pyruvoyl-dependent decarboxylation of aspartate to produce beta-alanine. The polypeptide is Aspartate 1-decarboxylase (Paramagnetospirillum magneticum (strain ATCC 700264 / AMB-1) (Magnetospirillum magneticum)).